The primary structure comprises 160 residues: Cytochrome b6-f complex subunit 4 (160 aa).

Transmembrane regions (helical) follow at residues 36-56, 95-115, and 128-148; these read LLYIFPVVILGTIACIVGLSV, LLGIALQTLVPLGLMLIPFIE, and IAMAVFLFGTATTIYLGIGAA.

It belongs to the cytochrome b family. PetD subfamily. In terms of assembly, the 4 large subunits of the cytochrome b6-f complex are cytochrome b6, subunit IV (17 kDa polypeptide, PetD), cytochrome f and the Rieske protein, while the 4 small subunits are PetG, PetL, PetM and PetN. The complex functions as a dimer.

The protein localises to the cellular thylakoid membrane. In terms of biological role, component of the cytochrome b6-f complex, which mediates electron transfer between photosystem II (PSII) and photosystem I (PSI), cyclic electron flow around PSI, and state transitions. The chain is Cytochrome b6-f complex subunit 4 from Synechococcus sp. (strain CC9311).